The chain runs to 282 residues: Acyl-CoA-binding domain-containing protein 6 (282 aa).

The tract at residues 1-34 is disordered; that stretch reads MATPFLPAGATTGDSGGELSSGDDSGDLESFQTP. S41 carries the phosphoserine modification. Residues 42 to 127 enclose the ACB domain; sequence LAELFEKAAA…VKKLDPGWNP (86 aa). An acyl-CoA-binding positions include 69–73 and K95; that span reads YARYK. Phosphoserine is present on S106. Y114 lines the an acyl-CoA pocket. 2 ANK repeats span residues 191–220 and 224–253; these read EGRALLHWACDRGHKELVKVLLQCEAGINC and EGQTALHYAAACEFSDIVELLLQSGADPTL.

As to quaternary structure, monomer.

It is found in the cytoplasm. It localises to the nucleus. Its function is as follows. Binds long-chain acyl-coenzyme A molecules with a strong preference for unsaturated C18:1-CoA, lower affinity for unsaturated C20:4-CoA, and very weak affinity for saturated C16:0-CoA. Does not bind fatty acids. Plays a role in protein N-myristoylation. The chain is Acyl-CoA-binding domain-containing protein 6 (Acbd6) from Rattus norvegicus (Rat).